Reading from the N-terminus, the 35-residue chain is Photosystem II reaction center protein T (35 aa).

The chain crosses the membrane as a helical span at residues 3 to 23 (ALVYTFLLVSTLGIIFFAIFF).

The protein belongs to the PsbT family. PSII is composed of 1 copy each of membrane proteins PsbA, PsbB, PsbC, PsbD, PsbE, PsbF, PsbH, PsbI, PsbJ, PsbK, PsbL, PsbM, PsbT, PsbY, PsbZ, Psb30/Ycf12, at least 3 peripheral proteins of the oxygen-evolving complex and a large number of cofactors. It forms dimeric complexes.

The protein resides in the plastid. The protein localises to the chloroplast thylakoid membrane. Its function is as follows. Found at the monomer-monomer interface of the photosystem II (PS II) dimer, plays a role in assembly and dimerization of PSII. PSII is a light-driven water plastoquinone oxidoreductase, using light energy to abstract electrons from H(2)O, generating a proton gradient subsequently used for ATP formation. This chain is Photosystem II reaction center protein T, found in Pisum sativum (Garden pea).